The primary structure comprises 156 residues: MRLRVAALGRIKSGPERTLVDDYLDRGTATGRAIGLGPFAESEIDTRSLKSSSDESRALAAGLDPGARIVLLDERGKALNSRQLARQIGQWRDEGCREAVFCIGGADGHDRSQLPQPDLMLSFGPAVFPHKLVRVMLAEQLYRAVSILAGTPYHRD.

2 residues coordinate S-adenosyl-L-methionine: leucine 72 and glycine 104.

It belongs to the RNA methyltransferase RlmH family. Homodimer.

It is found in the cytoplasm. The enzyme catalyses pseudouridine(1915) in 23S rRNA + S-adenosyl-L-methionine = N(3)-methylpseudouridine(1915) in 23S rRNA + S-adenosyl-L-homocysteine + H(+). Specifically methylates the pseudouridine at position 1915 (m3Psi1915) in 23S rRNA. The sequence is that of Ribosomal RNA large subunit methyltransferase H from Maricaulis maris (strain MCS10) (Caulobacter maris).